A 139-amino-acid chain; its full sequence is Large ribosomal subunit protein uL16 (139 aa).

Belongs to the universal ribosomal protein uL16 family. In terms of assembly, part of the 50S ribosomal subunit.

Functionally, binds 23S rRNA and is also seen to make contacts with the A and possibly P site tRNAs. This Neorickettsia sennetsu (strain ATCC VR-367 / Miyayama) (Ehrlichia sennetsu) protein is Large ribosomal subunit protein uL16 (rplP).